A 292-amino-acid chain; its full sequence is GTP cyclohydrolase FolE2 (292 aa).

This sequence belongs to the GTP cyclohydrolase IV family.

It carries out the reaction GTP + H2O = 7,8-dihydroneopterin 3'-triphosphate + formate + H(+). The protein operates within cofactor biosynthesis; 7,8-dihydroneopterin triphosphate biosynthesis; 7,8-dihydroneopterin triphosphate from GTP: step 1/1. Its function is as follows. Converts GTP to 7,8-dihydroneopterin triphosphate. This Staphylococcus haemolyticus (strain JCSC1435) protein is GTP cyclohydrolase FolE2.